Consider the following 330-residue polypeptide: GTPase Obg (330 aa).

Positions 1-159 (MNFIDEVKIY…MWIHLSLKLL (159 aa)) constitute an Obg domain. An OBG-type G domain is found at 160 to 327 (SDVGLVGLPN…IVKLALKIIK (168 aa)). GTP is bound by residues 166 to 173 (GLPNAGKS), 191 to 195 (FTTLV), 212 to 215 (DIPG), 279 to 282 (NKCD), and 308 to 310 (STY). The Mg(2+) site is built by Ser-173 and Thr-193.

It belongs to the TRAFAC class OBG-HflX-like GTPase superfamily. OBG GTPase family. Monomer. Mg(2+) serves as cofactor.

It is found in the cytoplasm. Functionally, an essential GTPase which binds GTP, GDP and possibly (p)ppGpp with moderate affinity, with high nucleotide exchange rates and a fairly low GTP hydrolysis rate. Plays a role in control of the cell cycle, stress response, ribosome biogenesis and in those bacteria that undergo differentiation, in morphogenesis control. In Rickettsia akari (strain Hartford), this protein is GTPase Obg.